The primary structure comprises 204 residues: Thymidine kinase (204 aa).

Residues 15 to 22 and 88 to 91 contribute to the ATP site; these read GSMFSGKS and DEVQ. The active-site Proton acceptor is glutamate 89. The Zn(2+) site is built by cysteine 145, cysteine 148, cysteine 183, and cysteine 186.

Belongs to the thymidine kinase family. In terms of assembly, homotetramer.

It localises to the cytoplasm. It carries out the reaction thymidine + ATP = dTMP + ADP + H(+). The chain is Thymidine kinase from Halalkalibacterium halodurans (strain ATCC BAA-125 / DSM 18197 / FERM 7344 / JCM 9153 / C-125) (Bacillus halodurans).